We begin with the raw amino-acid sequence, 296 residues long: Formamidopyrimidine-DNA glycosylase (296 aa).

Proline 2 acts as the Schiff-base intermediate with DNA in catalysis. Glutamate 3 (proton donor) is an active-site residue. The active-site Proton donor; for beta-elimination activity is lysine 61. Residues histidine 104, arginine 128, and lysine 174 each contribute to the DNA site. The segment at 260–294 (HAYGQQGQACDRCGSNIIREKFANRSSHFCPRCQL) adopts an FPG-type zinc-finger fold. Arginine 284 (proton donor; for delta-elimination activity) is an active-site residue.

It belongs to the FPG family. Monomer. Zn(2+) is required as a cofactor.

The catalysed reaction is Hydrolysis of DNA containing ring-opened 7-methylguanine residues, releasing 2,6-diamino-4-hydroxy-5-(N-methyl)formamidopyrimidine.. It carries out the reaction 2'-deoxyribonucleotide-(2'-deoxyribose 5'-phosphate)-2'-deoxyribonucleotide-DNA = a 3'-end 2'-deoxyribonucleotide-(2,3-dehydro-2,3-deoxyribose 5'-phosphate)-DNA + a 5'-end 5'-phospho-2'-deoxyribonucleoside-DNA + H(+). In terms of biological role, involved in base excision repair of DNA damaged by oxidation or by mutagenic agents. Acts as a DNA glycosylase that recognizes and removes damaged bases. Has a preference for oxidized purines, such as 7,8-dihydro-8-oxoguanine (8-oxoG). Has AP (apurinic/apyrimidinic) lyase activity and introduces nicks in the DNA strand. Cleaves the DNA backbone by beta-delta elimination to generate a single-strand break at the site of the removed base with both 3'- and 5'-phosphates. The polypeptide is Formamidopyrimidine-DNA glycosylase (Corynebacterium diphtheriae (strain ATCC 700971 / NCTC 13129 / Biotype gravis)).